Reading from the N-terminus, the 242-residue chain is Probable transcriptional regulatory protein Bamb_2332 (242 aa).

The protein belongs to the TACO1 family.

It localises to the cytoplasm. The sequence is that of Probable transcriptional regulatory protein Bamb_2332 from Burkholderia ambifaria (strain ATCC BAA-244 / DSM 16087 / CCUG 44356 / LMG 19182 / AMMD) (Burkholderia cepacia (strain AMMD)).